A 311-amino-acid chain; its full sequence is Nuclear hormone receptor family member nhr-111 (311 aa).

A DNA-binding region (nuclear receptor) is located at residues 39-115 (ITLCAVCGDT…KGMNKNAVQP (77 aa)). 2 consecutive NR C4-type zinc fingers follow at residues 42-62 (CAVCGDTSNGNHYGVPTCFGC) and 78-98 (CWNGDGNCVIDKANRNRCKSC). Residues 116–311 (ERTSHSYTVE…KACEIVISFL (196 aa)) form the NR LBD domain.

It belongs to the nuclear hormone receptor family.

Its subcellular location is the nucleus. Orphan nuclear receptor. This is Nuclear hormone receptor family member nhr-111 (nhr-111) from Caenorhabditis elegans.